A 192-amino-acid polypeptide reads, in one-letter code: UPF0312 protein Psyr_0457 (192 aa).

The N-terminal stretch at 1 to 23 (MLKKSLAALALGTALLSAGQAMA) is a signal peptide.

The protein belongs to the UPF0312 family. Type 1 subfamily.

The protein resides in the periplasm. This chain is UPF0312 protein Psyr_0457, found in Pseudomonas syringae pv. syringae (strain B728a).